The following is a 319-amino-acid chain: Acetyl-coenzyme A carboxylase carboxyl transferase subunit alpha (319 aa).

The 262-residue stretch at 35–296 (DLDKEIEQLE…KATLLRQLED (262 aa)) folds into the CoA carboxyltransferase C-terminal domain.

This sequence belongs to the AccA family. In terms of assembly, acetyl-CoA carboxylase is a heterohexamer composed of biotin carboxyl carrier protein (AccB), biotin carboxylase (AccC) and two subunits each of ACCase subunit alpha (AccA) and ACCase subunit beta (AccD).

It is found in the cytoplasm. It carries out the reaction N(6)-carboxybiotinyl-L-lysyl-[protein] + acetyl-CoA = N(6)-biotinyl-L-lysyl-[protein] + malonyl-CoA. Its pathway is lipid metabolism; malonyl-CoA biosynthesis; malonyl-CoA from acetyl-CoA: step 1/1. Component of the acetyl coenzyme A carboxylase (ACC) complex. First, biotin carboxylase catalyzes the carboxylation of biotin on its carrier protein (BCCP) and then the CO(2) group is transferred by the carboxyltransferase to acetyl-CoA to form malonyl-CoA. This is Acetyl-coenzyme A carboxylase carboxyl transferase subunit alpha from Vibrio parahaemolyticus serotype O3:K6 (strain RIMD 2210633).